The primary structure comprises 257 residues: Glutamate racemase (257 aa).

Substrate contacts are provided by residues 12–13 (DS) and 44–45 (YG). The active-site Proton donor/acceptor is the Cys75. Residue 76 to 77 (NT) participates in substrate binding. Cys185 serves as the catalytic Proton donor/acceptor. 186-187 (TH) is a binding site for substrate.

Belongs to the aspartate/glutamate racemases family.

It catalyses the reaction L-glutamate = D-glutamate. Its pathway is cell wall biogenesis; peptidoglycan biosynthesis. Its function is as follows. Provides the (R)-glutamate required for cell wall biosynthesis. This Clostridium botulinum (strain ATCC 19397 / Type A) protein is Glutamate racemase.